Reading from the N-terminus, the 227-residue chain is Enolase-phosphatase E1 (227 aa).

This sequence belongs to the HAD-like hydrolase superfamily. MasA/MtnC family. In terms of assembly, monomer. Requires Mg(2+) as cofactor.

The enzyme catalyses 5-methylsulfanyl-2,3-dioxopentyl phosphate + H2O = 1,2-dihydroxy-5-(methylsulfanyl)pent-1-en-3-one + phosphate. Its pathway is amino-acid biosynthesis; L-methionine biosynthesis via salvage pathway; L-methionine from S-methyl-5-thio-alpha-D-ribose 1-phosphate: step 3/6. It participates in amino-acid biosynthesis; L-methionine biosynthesis via salvage pathway; L-methionine from S-methyl-5-thio-alpha-D-ribose 1-phosphate: step 4/6. Its function is as follows. Bifunctional enzyme that catalyzes the enolization of 2,3-diketo-5-methylthiopentyl-1-phosphate (DK-MTP-1-P) into the intermediate 2-hydroxy-3-keto-5-methylthiopentenyl-1-phosphate (HK-MTPenyl-1-P), which is then dephosphorylated to form the acireductone 1,2-dihydroxy-3-keto-5-methylthiopentene (DHK-MTPene). The protein is Enolase-phosphatase E1 of Pseudomonas syringae pv. syringae (strain B728a).